We begin with the raw amino-acid sequence, 404 residues long: Cysteine desulfurase IscS (404 aa).

Residues 75-76 (AT), Asn-155, Gln-183, and 203-205 (SGH) each bind pyridoxal 5'-phosphate. Lys-206 is modified (N6-(pyridoxal phosphate)lysine). Thr-243 is a pyridoxal 5'-phosphate binding site. Catalysis depends on Cys-328, which acts as the Cysteine persulfide intermediate. Residue Cys-328 coordinates [2Fe-2S] cluster.

The protein belongs to the class-V pyridoxal-phosphate-dependent aminotransferase family. NifS/IscS subfamily. Homodimer. Forms a heterotetramer with IscU, interacts with other sulfur acceptors. Pyridoxal 5'-phosphate serves as cofactor.

The protein resides in the cytoplasm. It carries out the reaction (sulfur carrier)-H + L-cysteine = (sulfur carrier)-SH + L-alanine. It functions in the pathway cofactor biosynthesis; iron-sulfur cluster biosynthesis. Master enzyme that delivers sulfur to a number of partners involved in Fe-S cluster assembly, tRNA modification or cofactor biosynthesis. Catalyzes the removal of elemental sulfur atoms from cysteine to produce alanine. Functions as a sulfur delivery protein for Fe-S cluster synthesis onto IscU, an Fe-S scaffold assembly protein, as well as other S acceptor proteins. The protein is Cysteine desulfurase IscS of Mannheimia succiniciproducens (strain KCTC 0769BP / MBEL55E).